A 301-amino-acid polypeptide reads, in one-letter code: uncharacterized protein (301 aa).

Belongs to the asfivirus E301R family. As to quaternary structure, interacts with host IRF3.

In terms of biological role, plays a role in the inhibition of host innate immune system by acting as a negatively regulator of type I interferon production. Mechanistically, interacts with and prevents host IRF3 nuclear localization to inhibit its transcriptional activity. This is an uncharacterized protein from African swine fever virus (isolate Warthog/Namibia/Wart80/1980) (ASFV).